The sequence spans 413 residues: Hemocyanin type 2 unit e (413 aa).

Asn-17 carries an N-linked (GlcNAc...) (high mannose) asparagine glycan. His-49 contributes to the Cu cation binding site. A disulfide bond links Cys-55 and Cys-66. The segment at residues 67-69 (CVH) is a cross-link (2'-(S-cysteinyl)-histidine (Cys-His)). Positions 69 and 78 each coordinate Cu cation. An N-linked (GlcNAc...) (high mannose) asparagine glycan is attached at Asn-127. Cystine bridges form between Cys-179/Cys-246 and Cys-336/Cys-342. Residues His-189, His-193, and His-220 each contribute to the Cu cation site.

This sequence belongs to the tyrosinase family. Hemocyanin subfamily. Decamers of large identical subunits, each containing 8 globular oxygen-binding functional units. The cofactor is Cu(2+). As to expression, hemolymph.

The protein resides in the secreted. It localises to the extracellular space. Hemocyanins are copper-containing oxygen carriers occurring freely dissolved in the hemolymph of many mollusks and arthropods. This is Hemocyanin type 2 unit e from Rapana venosa (Veined rapa whelk).